The chain runs to 245 residues: Tetraspanin-6 (245 aa).

The Cytoplasmic portion of the chain corresponds to 1–19 (MASPSRRLQTKPVITCFKS). Residues 20–40 (VLLIYTFIFWITGVILLAVGI) form a helical membrane-spanning segment. Residues 41–59 (WGKVSLENYFSLLNEKATN) are Extracellular-facing. The helical transmembrane segment at 60–80 (VPFVLIATGTVIILLGTFGCF) threads the bilayer. Residues 81 to 93 (ATCRASAWMLKLY) lie on the Cytoplasmic side of the membrane. Residues 94–114 (AMFLTLVFLVELVAAIVGFVF) traverse the membrane as a helical segment. Residues 115-208 (RHEIKNSFKN…IKVMTIIESE (94 aa)) lie on the Extracellular side of the membrane. N-linked (GlcNAc...) asparagine glycosylation is present at N134. A helical transmembrane segment spans residues 209-229 (MGVVAGISFGVACFQLIGIFL). Over 230–245 (AYCLSRAITNNQYEIV) the chain is Cytoplasmic.

This sequence belongs to the tetraspanin (TM4SF) family.

Its subcellular location is the membrane. The polypeptide is Tetraspanin-6 (TSPAN6) (Homo sapiens (Human)).